The chain runs to 229 residues: PKHD-type hydroxylase RPA3479 (229 aa).

One can recognise a Fe2OG dioxygenase domain in the interval 78–180 (QIFPPLFNRY…RVASFFWLQS (103 aa)). 3 residues coordinate Fe cation: histidine 98, aspartate 100, and histidine 161. Arginine 171 provides a ligand contact to 2-oxoglutarate.

Fe(2+) serves as cofactor. L-ascorbate is required as a cofactor.

The protein is PKHD-type hydroxylase RPA3479 of Rhodopseudomonas palustris (strain ATCC BAA-98 / CGA009).